The sequence spans 380 residues: Chorismate synthase (380 aa).

NADP(+) is bound at residue Arg-49. Residues Gly-288, 303–307, and Arg-330 contribute to the FMN site; that span reads KPPSS.

This sequence belongs to the chorismate synthase family. Requires FMNH2 as cofactor.

It catalyses the reaction 5-O-(1-carboxyvinyl)-3-phosphoshikimate = chorismate + phosphate. Its pathway is metabolic intermediate biosynthesis; chorismate biosynthesis; chorismate from D-erythrose 4-phosphate and phosphoenolpyruvate: step 7/7. Catalyzes the anti-1,4-elimination of the C-3 phosphate and the C-6 proR hydrogen from 5-enolpyruvylshikimate-3-phosphate (EPSP) to yield chorismate, which is the branch point compound that serves as the starting substrate for the three terminal pathways of aromatic amino acid biosynthesis. This reaction introduces a second double bond into the aromatic ring system. This Aeropyrum pernix (strain ATCC 700893 / DSM 11879 / JCM 9820 / NBRC 100138 / K1) protein is Chorismate synthase.